The primary structure comprises 59 residues: Large ribosomal subunit protein uL30 (59 aa).

Belongs to the universal ribosomal protein uL30 family. Part of the 50S ribosomal subunit.

The sequence is that of Large ribosomal subunit protein uL30 from Clostridium kluyveri (strain ATCC 8527 / DSM 555 / NBRC 12016 / NCIMB 10680 / K1).